The sequence spans 355 residues: Myricetin 7/4'-O-methyltransferase 2 (355 aa).

S-adenosyl-L-methionine is bound at residue D221. The active-site Proton acceptor is H259.

Belongs to the class I-like SAM-binding methyltransferase superfamily. Cation-independent O-methyltransferase family. As to quaternary structure, homodimer. Mainly expressed in leaves secreting glandular trichomes types 1 and 4 and, to a lesser extent, in storage trichomes type 6.

It carries out the reaction quercetin + S-adenosyl-L-methionine = rhamnetin + S-adenosyl-L-homocysteine + H(+). It catalyses the reaction kaempferol + S-adenosyl-L-methionine = kaempferide + S-adenosyl-L-homocysteine + H(+). The enzyme catalyses myricetin + S-adenosyl-L-methionine = 7-O-methylmyricetin + S-adenosyl-L-homocysteine + H(+). The catalysed reaction is kaempferide + S-adenosyl-L-methionine = 7,4'-O-dimethylkaempferol + S-adenosyl-L-homocysteine + H(+). It carries out the reaction isorhamnetin + S-adenosyl-L-methionine = 3',4'-O-dimethylquercetin + S-adenosyl-L-homocysteine + 2 H(+). It catalyses the reaction 3',4',5,7-tetrahydroxy-3-methoxyflavone + S-adenosyl-L-methionine = 3',4',5-trihydroxy-3,7-dimethoxyflavone + S-adenosyl-L-homocysteine + H(+). The enzyme catalyses rhamnetin + S-adenosyl-L-methionine = 7,4'-O-dimethylquercetin + S-adenosyl-L-homocysteine + H(+). The catalysed reaction is syringetin + S-adenosyl-L-methionine = 7,3',5'-O-trimethylmyricetin + S-adenosyl-L-homocysteine + H(+). It carries out the reaction 3',4',5'-O-trimethylmyricetin + S-adenosyl-L-methionine = 7,3',4',5'-O-tetramethylmyricetin + S-adenosyl-L-homocysteine. It functions in the pathway flavonoid metabolism. Flavonoid 7/4'-O-methyltransferase involved in the biosynthesis of polymethoxylated flavonoids natural products such as myricetin derivatives, aroma compounds possessing antioxidant properties and exhibiting pharmacological activities such as anti-carcinogen, anti-viral, anti-thrombotic, anti-diabetic, anti-atherosclerotic, and anti-inflammatory effects. Catalyzes S-adenosylmethionine-dependent regioselective 7/4'-O-methylation of flavonoids; active on various hydroxylated flavonoid substrates, including myricetin, quercetin and kaempferol. Mediates the formation of 4'-methyl derivatives from kaempferol, 3'-methyl quercetin (isorhamnetin), 7-methyl quercetin (rhamnetin) and 3'-methyl myricetin, producing 4'-methyl kaempferol (kaempferide), 3',4'-dimethyl quercetin (4'-O-methyl isorhamnetin), 7,4'-dimethyl quercetin (4'-O-methyl rhamnetin, rhamnacene) and 3',4'-dimethyl myricetin, respectively. Triggers the 7-O-methylation of quercetin, myricetin, 4'-methyl kaempferol (kaempferide), 3-methyl quercetin, 3',5'-dimethyl myricetin (syringetin) and 3',4',5'-trimethyl myricetin, thus leading to production of 7-methyl quercetin (rhamnetin), 7-methyl myricetin, 7,4'-dimethyl kaempferol (7-O-methyl kaempferide), 3,7-dimethyl quercetin, 7,3',5'-trimethyl myricetin (7-O-methyl syringetin) and 7,3',4',5'-tetramethyl myricetin, respectively. The chain is Myricetin 7/4'-O-methyltransferase 2 from Solanum habrochaites (Wild tomato).